Consider the following 85-residue polypeptide: Actobindin homolog (85 aa).

One can recognise a WH2 domain in the interval 35–52 (DRNELLSGIKEGKELKKA).

Is able to bind two actin monomers at high concentrations of G-actin. The polypeptide is Actobindin homolog (Entamoeba histolytica).